Reading from the N-terminus, the 450-residue chain is Glutamyl-tRNA reductase (450 aa).

Substrate contacts are provided by residues 45–48 (TCNR), Ser-107, 112–114 (ERE), and Gln-118. Cys-46 (nucleophile) is an active-site residue. 196-201 (GTGAYA) serves as a coordination point for NADP(+).

The protein belongs to the glutamyl-tRNA reductase family. As to quaternary structure, homodimer.

The catalysed reaction is (S)-4-amino-5-oxopentanoate + tRNA(Glu) + NADP(+) = L-glutamyl-tRNA(Glu) + NADPH + H(+). It participates in porphyrin-containing compound metabolism; protoporphyrin-IX biosynthesis; 5-aminolevulinate from L-glutamyl-tRNA(Glu): step 1/2. Its function is as follows. Catalyzes the NADPH-dependent reduction of glutamyl-tRNA(Glu) to glutamate 1-semialdehyde (GSA). This Micrococcus luteus (strain ATCC 4698 / DSM 20030 / JCM 1464 / CCM 169 / CCUG 5858 / IAM 1056 / NBRC 3333 / NCIMB 9278 / NCTC 2665 / VKM Ac-2230) (Micrococcus lysodeikticus) protein is Glutamyl-tRNA reductase.